The primary structure comprises 106 residues: Defensin-like protein 1 (106 aa).

Positions 1 to 25 are cleaved as a signal peptide; the sequence is MARSLCFMAFAVLAMMLFVAYEVQA. Intrachain disulfides connect Cys-29–Cys-73, Cys-40–Cys-60, Cys-46–Cys-67, and Cys-50–Cys-69.

The protein belongs to the DEFL family.

The protein resides in the secreted. Its subcellular location is the vacuole. This Nicotiana paniculata protein is Defensin-like protein 1 (THIO1).